The sequence spans 497 residues: tRNA-2-methylthio-N(6)-dimethylallyladenosine synthase (497 aa).

Basic and acidic residues predominate over residues 1 to 10 (MTLLDSDSRQ). Residues 1–26 (MTLLDSDSRQSAEVLPAAGPAPDRPR) form a disordered region. In terms of domain architecture, MTTase N-terminal spans 26–142 (RTYQVRTFGC…LPVLLERARI (117 aa)). Residues Cys-35, Cys-71, Cys-105, Cys-179, Cys-183, and Cys-186 each contribute to the [4Fe-4S] cluster site. A Radical SAM core domain is found at 165 to 395 (RESVYAAWVA…VALVEQIALE (231 aa)). The TRAM domain maps to 398–464 (QAQVGRVVEV…PHCLIADQVL (67 aa)).

The protein belongs to the methylthiotransferase family. MiaB subfamily. As to quaternary structure, monomer. [4Fe-4S] cluster is required as a cofactor.

It is found in the cytoplasm. It carries out the reaction N(6)-dimethylallyladenosine(37) in tRNA + (sulfur carrier)-SH + AH2 + 2 S-adenosyl-L-methionine = 2-methylsulfanyl-N(6)-dimethylallyladenosine(37) in tRNA + (sulfur carrier)-H + 5'-deoxyadenosine + L-methionine + A + S-adenosyl-L-homocysteine + 2 H(+). Catalyzes the methylthiolation of N6-(dimethylallyl)adenosine (i(6)A), leading to the formation of 2-methylthio-N6-(dimethylallyl)adenosine (ms(2)i(6)A) at position 37 in tRNAs that read codons beginning with uridine. This chain is tRNA-2-methylthio-N(6)-dimethylallyladenosine synthase, found in Acidothermus cellulolyticus (strain ATCC 43068 / DSM 8971 / 11B).